A 164-amino-acid chain; its full sequence is Thiol peroxidase (164 aa).

Residues V18 to N163 form the Thioredoxin domain. C60 functions as the Cysteine sulfenic acid (-SOH) intermediate in the catalytic mechanism. Residues C60 and C93 are joined by a disulfide bond.

The protein belongs to the peroxiredoxin family. Tpx subfamily. In terms of assembly, homodimer.

The catalysed reaction is a hydroperoxide + [thioredoxin]-dithiol = an alcohol + [thioredoxin]-disulfide + H2O. Its function is as follows. Thiol-specific peroxidase that catalyzes the reduction of hydrogen peroxide and organic hydroperoxides to water and alcohols, respectively. Plays a role in cell protection against oxidative stress by detoxifying peroxides. This Staphylococcus epidermidis (strain ATCC 35984 / DSM 28319 / BCRC 17069 / CCUG 31568 / BM 3577 / RP62A) protein is Thiol peroxidase.